We begin with the raw amino-acid sequence, 953 residues long: Leucine-rich repeat receptor protein kinase HPCA1 (953 aa).

The first 23 residues, 1-23 (MSSRTGASLLLILFFFQICSVSA), serve as a signal peptide directing secretion. Over 24 to 558 (LTNGLDASAL…EVSSKSSNKS (535 aa)) the chain is Extracellular. LRR repeat units lie at residues 64–88 (NDRV…ISFL), 89–113 (SELR…IGNL), 115–137 (KLRN…IGTL), 138–162 (KELI…GLLS), 164–187 (LYWF…TSAP), and 192–216 (LLQT…LFSS). Asparagine 182 carries N-linked (GlcNAc...) asparagine glycosylation. A glycan (N-linked (GlcNAc...) asparagine) is linked at asparagine 217. 7 LRR repeats span residues 218 to 241 (MSLI…LSLV), 242 to 265 (KTLT…LNNL), 266 to 290 (TNLN…SLTS), 292 to 311 (YTLD…SWIS), 313 to 337 (LPSL…FFSP), 339 to 361 (QLQT…TDVS), and 362 to 384 (SQLE…ANKV). 3 N-linked (GlcNAc...) asparagine glycosylation sites follow: asparagine 264, asparagine 284, and asparagine 298. The N-linked (GlcNAc...) asparagine glycan is linked to asparagine 411. 2 cysteine pairs are disulfide-bonded: cysteine 421/cysteine 424 and cysteine 434/cysteine 436. N-linked (GlcNAc...) asparagine glycans are attached at residues asparagine 456, asparagine 459, asparagine 510, and asparagine 523. A helical transmembrane segment spans residues 559 to 579 (ILIGAVVGVVVLLLLLTIAGI). Residues 580-953 (YALRQKKRAE…NFPASKLEPQ (374 aa)) lie on the Cytoplasmic side of the membrane. A phosphoserine mark is found at serine 606 and serine 607. One can recognise a Protein kinase domain in the interval 631-905 (FSEANDVGGG…EVVKEIENIM (275 aa)). Residues 637–645 (VGGGGYGKV) and lysine 659 each bind ATP. Aspartate 755 functions as the Proton acceptor in the catalytic mechanism. Phosphothreonine occurs at positions 786, 789, and 790. Residues 912–921 (PNSDSATSSR) are compositionally biased toward polar residues. The tract at residues 912–953 (PNSDSATSSRTYEDAIKGSGDPYGSESFQYSGNFPASKLEPQ) is disordered. Serine 942 carries the phosphoserine modification.

The protein belongs to the protein kinase superfamily. Ser/Thr protein kinase family. Post-translationally, autophosphorylated at Ser-606, Ser-607, Thr-786, Thr-789, Thr-790 and Ser-942 in response to extracellular hydrogen peroxide. As to expression, widely expressed.

Its subcellular location is the cell membrane. It carries out the reaction L-seryl-[protein] + ATP = O-phospho-L-seryl-[protein] + ADP + H(+). The catalysed reaction is L-threonyl-[protein] + ATP = O-phospho-L-threonyl-[protein] + ADP + H(+). Its activity is regulated as follows. Activated by autophosphorylation on serine and threonine residues in response to extracellular hydrogen peroxide. Leucine-rich repeat receptor protein kinase that acts as sensor of extracellular hydrogen peroxide. Required for intracellular calcium influx in response to extracellular hydrogen peroxide. Mediates hydrogen peroxide-induced activation of calcium channels in guard cells and is required for stomatal closure. This chain is Leucine-rich repeat receptor protein kinase HPCA1, found in Arabidopsis thaliana (Mouse-ear cress).